The primary structure comprises 460 residues: Phosphomethylpyrimidine synthase (460 aa).

Substrate-binding positions include N80, M109, Y139, H175, 195–197 (SRG), 236–239 (DSLR), and E275. H279 lines the Zn(2+) pocket. Residue Y302 coordinates substrate. H343 contacts Zn(2+). Positions 423, 426, and 431 each coordinate [4Fe-4S] cluster.

It belongs to the ThiC family. The cofactor is [4Fe-4S] cluster.

The enzyme catalyses 5-amino-1-(5-phospho-beta-D-ribosyl)imidazole + S-adenosyl-L-methionine = 4-amino-2-methyl-5-(phosphooxymethyl)pyrimidine + CO + 5'-deoxyadenosine + formate + L-methionine + 3 H(+). The protein operates within cofactor biosynthesis; thiamine diphosphate biosynthesis. In terms of biological role, catalyzes the synthesis of the hydroxymethylpyrimidine phosphate (HMP-P) moiety of thiamine from aminoimidazole ribotide (AIR) in a radical S-adenosyl-L-methionine (SAM)-dependent reaction. This is Phosphomethylpyrimidine synthase from Rippkaea orientalis (strain PCC 8801 / RF-1) (Cyanothece sp. (strain PCC 8801)).